Here is a 311-residue protein sequence, read N- to C-terminus: Aspartate carbamoyltransferase catalytic subunit (311 aa).

Carbamoyl phosphate is bound by residues arginine 55 and threonine 56. Position 85 (lysine 85) interacts with L-aspartate. Positions 106, 135, and 138 each coordinate carbamoyl phosphate. Arginine 168 and arginine 230 together coordinate L-aspartate. Leucine 268 and proline 269 together coordinate carbamoyl phosphate.

This sequence belongs to the aspartate/ornithine carbamoyltransferase superfamily. ATCase family. Heterododecamer (2C3:3R2) of six catalytic PyrB chains organized as two trimers (C3), and six regulatory PyrI chains organized as three dimers (R2).

The enzyme catalyses carbamoyl phosphate + L-aspartate = N-carbamoyl-L-aspartate + phosphate + H(+). Its pathway is pyrimidine metabolism; UMP biosynthesis via de novo pathway; (S)-dihydroorotate from bicarbonate: step 2/3. Its function is as follows. Catalyzes the condensation of carbamoyl phosphate and aspartate to form carbamoyl aspartate and inorganic phosphate, the committed step in the de novo pyrimidine nucleotide biosynthesis pathway. This is Aspartate carbamoyltransferase catalytic subunit from Citrobacter koseri (strain ATCC BAA-895 / CDC 4225-83 / SGSC4696).